A 297-amino-acid polypeptide reads, in one-letter code: Calponin-1 (297 aa).

One can recognise a Calponin-homology (CH) domain in the interval 28–131 (HQREQELREW…STLLALASMA (104 aa)). Residue Ser-48 is modified to Phosphoserine. Calponin-like repeat units lie at residues 164-189 (IGLQMGTNKFASQQGMTAYGTRRHLY), 204-229 (ISLQMGTNKGASQAGMTAPGTKRQIF), and 243-268 (VSLQMGSNKGASQRGMTVYGLPRQVY). Thr-170 carries the phosphothreonine; by ROCK2 modification. Residue Ser-175 is modified to Phosphoserine; by ROCK2. A phosphothreonine; by ROCK2 mark is found at Thr-180 and Thr-184. Residue Thr-259 is modified to Phosphothreonine; by ROCK2.

It belongs to the calponin family. As to quaternary structure, part of cGMP kinase signaling complex at least composed of ACTA2/alpha-actin, CNN1/calponin H1, PLN/phospholamban, PRKG1 and ITPR1. As to expression, smooth muscle, and tissues containing significant amounts of smooth muscle.

In terms of biological role, thin filament-associated protein that is implicated in the regulation and modulation of smooth muscle contraction. It is capable of binding to actin, calmodulin and tropomyosin. The interaction of calponin with actin inhibits the actomyosin Mg-ATPase activity. The polypeptide is Calponin-1 (Cnn1) (Rattus norvegicus (Rat)).